Consider the following 355-residue polypeptide: Sesquiterpene synthase-like protein Agr11 (355 aa).

The protein belongs to the terpene synthase family.

The sequence is that of Sesquiterpene synthase-like protein Agr11 from Cyclocybe aegerita (Black poplar mushroom).